A 302-amino-acid chain; its full sequence is Homoserine O-acetyltransferase (302 aa).

Cysteine 142 serves as the catalytic Acyl-thioester intermediate. Residues lysine 163 and serine 192 each coordinate substrate. Histidine 235 serves as the catalytic Proton acceptor. Residue glutamate 237 is part of the active site. Substrate is bound at residue arginine 249.

Belongs to the MetA family.

It is found in the cytoplasm. It catalyses the reaction L-homoserine + acetyl-CoA = O-acetyl-L-homoserine + CoA. The protein operates within amino-acid biosynthesis; L-methionine biosynthesis via de novo pathway; O-acetyl-L-homoserine from L-homoserine: step 1/1. In terms of biological role, transfers an acetyl group from acetyl-CoA to L-homoserine, forming acetyl-L-homoserine. The sequence is that of Homoserine O-acetyltransferase from Geobacillus kaustophilus.